We begin with the raw amino-acid sequence, 305 residues long: NAD kinase (305 aa).

Asp88 acts as the Proton acceptor in catalysis. NAD(+) contacts are provided by residues 88–89, Arg93, 162–163, Lys173, Asn192, 203–208, and Gln262; these read DG, NE, and TAYSFS.

This sequence belongs to the NAD kinase family. Requires a divalent metal cation as cofactor.

Its subcellular location is the cytoplasm. It catalyses the reaction NAD(+) + ATP = ADP + NADP(+) + H(+). In terms of biological role, involved in the regulation of the intracellular balance of NAD and NADP, and is a key enzyme in the biosynthesis of NADP. Catalyzes specifically the phosphorylation on 2'-hydroxyl of the adenosine moiety of NAD to yield NADP. In Tropheryma whipplei (strain TW08/27) (Whipple's bacillus), this protein is NAD kinase.